The chain runs to 237 residues: Protein XpsM (237 aa).

Residues 1–21 (MPAATWTASPSPPNWPVPMPR) form a disordered region. Residues 10-21 (PSPPNWPVPMPR) show a composition bias toward pro residues.

This is Protein XpsM (xpsM) from Xanthomonas campestris pv. campestris (strain ATCC 33913 / DSM 3586 / NCPPB 528 / LMG 568 / P 25).